The sequence spans 63 residues: MLDFEAIIEAGEQLIQKISFDLQHISSVLNTQVFDPFEYCYYRGGSFWEIESAEEFSGDDEFT.

This is Non-structural protein 3b from Avian infectious bronchitis virus (strain UK/68/84) (IBV).